The following is a 202-amino-acid chain: Small ribosomal subunit protein uS2 (202 aa).

This sequence belongs to the universal ribosomal protein uS2 family.

This chain is Small ribosomal subunit protein uS2 (rps2), found in Pyrococcus abyssi (strain GE5 / Orsay).